Here is a 354-residue protein sequence, read N- to C-terminus: S-adenosylmethionine:tRNA ribosyltransferase-isomerase (354 aa).

The protein belongs to the QueA family. As to quaternary structure, monomer.

The protein localises to the cytoplasm. It catalyses the reaction 7-aminomethyl-7-carbaguanosine(34) in tRNA + S-adenosyl-L-methionine = epoxyqueuosine(34) in tRNA + adenine + L-methionine + 2 H(+). The protein operates within tRNA modification; tRNA-queuosine biosynthesis. Transfers and isomerizes the ribose moiety from AdoMet to the 7-aminomethyl group of 7-deazaguanine (preQ1-tRNA) to give epoxyqueuosine (oQ-tRNA). The sequence is that of S-adenosylmethionine:tRNA ribosyltransferase-isomerase from Salmonella dublin (strain CT_02021853).